Consider the following 207-residue polypeptide: Putative 3-methyladenine DNA glycosylase (207 aa).

Belongs to the DNA glycosylase MPG family.

This Burkholderia cenocepacia (strain HI2424) protein is Putative 3-methyladenine DNA glycosylase.